The primary structure comprises 222 residues: N-(5'-phosphoribosyl)anthranilate isomerase (222 aa).

This sequence belongs to the TrpF family.

It catalyses the reaction N-(5-phospho-beta-D-ribosyl)anthranilate = 1-(2-carboxyphenylamino)-1-deoxy-D-ribulose 5-phosphate. It functions in the pathway amino-acid biosynthesis; L-tryptophan biosynthesis; L-tryptophan from chorismate: step 3/5. The protein is N-(5'-phosphoribosyl)anthranilate isomerase of Rhizobium rhizogenes (strain K84 / ATCC BAA-868) (Agrobacterium radiobacter).